Here is a 165-residue protein sequence, read N- to C-terminus: 3-hydroxyacyl-[acyl-carrier-protein] dehydratase FabZ (165 aa).

H64 is an active-site residue.

It belongs to the thioester dehydratase family. FabZ subfamily.

Its subcellular location is the cytoplasm. It catalyses the reaction a (3R)-hydroxyacyl-[ACP] = a (2E)-enoyl-[ACP] + H2O. In terms of biological role, involved in unsaturated fatty acids biosynthesis. Catalyzes the dehydration of short chain beta-hydroxyacyl-ACPs and long chain saturated and unsaturated beta-hydroxyacyl-ACPs. This Acidiphilium cryptum (strain JF-5) protein is 3-hydroxyacyl-[acyl-carrier-protein] dehydratase FabZ.